Reading from the N-terminus, the 211-residue chain is Ribosomal RNA small subunit methyltransferase G (211 aa).

S-adenosyl-L-methionine is bound by residues Gly81, Leu86, 132 to 133 (AE), and Arg147.

It belongs to the methyltransferase superfamily. RNA methyltransferase RsmG family.

Its subcellular location is the cytoplasm. It carries out the reaction guanosine(527) in 16S rRNA + S-adenosyl-L-methionine = N(7)-methylguanosine(527) in 16S rRNA + S-adenosyl-L-homocysteine. Its function is as follows. Specifically methylates the N7 position of guanine in position 527 of 16S rRNA. The polypeptide is Ribosomal RNA small subunit methyltransferase G (Dichelobacter nodosus (strain VCS1703A)).